A 592-amino-acid polypeptide reads, in one-letter code: Aspartate--tRNA ligase (592 aa).

Residue E180 coordinates L-aspartate. The tract at residues 204–207 is aspartate; the sequence is QLFK. Residue R226 participates in L-aspartate binding. ATP contacts are provided by residues 226 to 228 and Q235; that span reads RDE. H455 contacts L-aspartate. E489 is a binding site for ATP. Residue R496 participates in L-aspartate binding. Residue 541 to 544 coordinates ATP; it reads GFDR.

It belongs to the class-II aminoacyl-tRNA synthetase family. Type 1 subfamily. In terms of assembly, homodimer.

It is found in the cytoplasm. It catalyses the reaction tRNA(Asp) + L-aspartate + ATP = L-aspartyl-tRNA(Asp) + AMP + diphosphate. Functionally, catalyzes the attachment of L-aspartate to tRNA(Asp) in a two-step reaction: L-aspartate is first activated by ATP to form Asp-AMP and then transferred to the acceptor end of tRNA(Asp). The polypeptide is Aspartate--tRNA ligase (Clostridium tetani (strain Massachusetts / E88)).